The primary structure comprises 122 residues: Large ribosomal subunit protein uL14 (122 aa).

The protein belongs to the universal ribosomal protein uL14 family. As to quaternary structure, part of the 50S ribosomal subunit. Forms a cluster with proteins L3 and L19. In the 70S ribosome, L14 and L19 interact and together make contacts with the 16S rRNA in bridges B5 and B8.

Functionally, binds to 23S rRNA. Forms part of two intersubunit bridges in the 70S ribosome. The polypeptide is Large ribosomal subunit protein uL14 (Chloroflexus aggregans (strain MD-66 / DSM 9485)).